The chain runs to 499 residues: ADP,ATP carrier protein 5 (499 aa).

11 consecutive transmembrane segments (helical) span residues 25–45 (LGKF…QNIL), 61–81 (IAGF…VIIY), 93–113 (IFYY…FVIY), 148–168 (YIVY…LLFW), 183–203 (FYTF…FLMM), 223–243 (ITLV…CCVL), 286–306 (LWLL…VEAV), 327–347 (LYIL…NNVM), 356–376 (AVIS…LIVF), 380–400 (ILSL…VSIG), and 468–488 (SISP…IYAV).

Belongs to the ADP/ATP translocase tlc family.

The protein resides in the cell membrane. In terms of biological role, provides the rickettsial cell with host ATP in exchange for rickettsial ADP. This is an obligate exchange system. This energy acquiring activity is an important component of rickettsial parasitism. This is ADP,ATP carrier protein 5 (tlcE) from Rickettsia felis (strain ATCC VR-1525 / URRWXCal2) (Rickettsia azadi).